Reading from the N-terminus, the 81-residue chain is MKAGIHPDYKKVVFMDTNTGFKFLSGSTKGSSETVEWEDGNTYPLLKVEISSDSHPFYTGRQKFATADGRVDRFNKKYGIK.

The protein belongs to the bacterial ribosomal protein bL31 family. Type B subfamily. Part of the 50S ribosomal subunit.

The sequence is that of Large ribosomal subunit protein bL31B from Bacillus cereus (strain G9842).